The following is a 261-amino-acid chain: uncharacterized protein (261 aa).

The first 22 residues, 1 to 22, serve as a signal peptide directing secretion; the sequence is MKSIKRIGLCISLLILIIFVTS. C23 carries the N-palmitoyl cysteine lipid modification. Residue C23 is the site of S-diacylglycerol cysteine attachment.

Belongs to the staphylococcal tandem lipoprotein family.

It localises to the cell membrane. This is an uncharacterized protein from Staphylococcus aureus (strain USA300).